The primary structure comprises 417 residues: Hydrogen cyanide synthase subunit HcnC (417 aa).

The signal sequence occupies residues 1 to 18 (MIKHYDVVIAGGGVIGAS). 7 to 21 (VVIAGGGVIGASCAY) contacts FAD. The N-palmitoyl cysteine moiety is linked to residue Cys19. Cys19 carries the S-diacylglycerol cysteine lipid modification. A helical membrane pass occupies residues 46–66 (SAGGLWAIGESVGLGCGVIFF).

It belongs to the FAD-dependent glycerol-3-phosphate dehydrogenase family. In terms of assembly, heterotrimer of HcnA, HcnB and HcnC.

It is found in the cell membrane. It catalyses the reaction glycine + 2 A = hydrogen cyanide + 2 AH2 + CO2. Functionally, a three-component membrane-bound flavoenzyme that catalyzes the formation of hydrogen cyanide, a secondary metabolite, by transfer of electrons to a cyanide-resistant branch of the aerobic respiratory chain. Contributes to suppression of black root rot of tobacco. The polypeptide is Hydrogen cyanide synthase subunit HcnC (Pseudomonas protegens (strain DSM 19095 / LMG 27888 / CFBP 6595 / CHA0)).